A 99-amino-acid polypeptide reads, in one-letter code: Large ribosomal subunit protein uL23 (99 aa).

The protein belongs to the universal ribosomal protein uL23 family. As to quaternary structure, part of the 50S ribosomal subunit. Contacts protein L29, and trigger factor when it is bound to the ribosome.

One of the early assembly proteins it binds 23S rRNA. One of the proteins that surrounds the polypeptide exit tunnel on the outside of the ribosome. Forms the main docking site for trigger factor binding to the ribosome. The polypeptide is Large ribosomal subunit protein uL23 (Magnetococcus marinus (strain ATCC BAA-1437 / JCM 17883 / MC-1)).